We begin with the raw amino-acid sequence, 567 residues long: Zinc finger protein 512 (567 aa).

Positions 1 to 34 (MSSRLGAVPATPGPTPFKQQRSTRIVGAKNSRTQ) are disordered. Glycyl lysine isopeptide (Lys-Gly) (interchain with G-Cter in SUMO2) cross-links involve residues Lys18 and Lys84. The tract at residues 87–148 (AASHVEGPGG…QTRRIRKEPP (62 aa)) is disordered. The segment covering 119-130 (KKHKLYGRKQRP) has biased composition (basic residues). The segment at 197–220 (FTCHHCGKQLRSLAGMKYHVMANH) adopts a C2H2-type 1 zinc-finger fold. A Glycyl lysine isopeptide (Lys-Gly) (interchain with G-Cter in SUMO2) cross-link involves residue Lys227. The C2H2-type 2 zinc finger occupies 287–310 (LKCHHCGKPYRSKAGLAYHLRSEH). A Glycyl lysine isopeptide (Lys-Gly) (interchain with G-Cter in SUMO2) cross-link involves residue Lys333. A C2H2-type 3; atypical zinc finger spans residues 406 to 430 (IQCPNQGCEAVYSSVSGLKAHLGSC). The segment at 440-463 (YKCLLCQKEFVSESGVKYHINSVH) adopts a C2H2-type 3 zinc-finger fold. The span at 485-494 (KQRQQEEEKR) shows a compositional bias: basic and acidic residues. The tract at residues 485–567 (KQRQQEEEKR…PKTNHKRGKK (83 aa)) is disordered. Positions 495–508 (RQQHRSRRSLRRRQ) are enriched in basic residues. Residues 523–544 (VGKDQRRNHEELLVATSRKEPE) show a composition bias toward basic and acidic residues. Basic residues predominate over residues 556–567 (RSPKTNHKRGKK).

Belongs to the krueppel C2H2-type zinc-finger protein family.

It is found in the nucleus. Its function is as follows. May be involved in transcriptional regulation. In Bos taurus (Bovine), this protein is Zinc finger protein 512 (ZNF512).